A 295-amino-acid polypeptide reads, in one-letter code: Acetylglutamate kinase (295 aa).

Substrate-binding positions include 64–65, Arg-86, and Asn-190; that span reads GG.

This sequence belongs to the acetylglutamate kinase family. ArgB subfamily.

The protein localises to the cytoplasm. It carries out the reaction N-acetyl-L-glutamate + ATP = N-acetyl-L-glutamyl 5-phosphate + ADP. The protein operates within amino-acid biosynthesis; L-arginine biosynthesis; N(2)-acetyl-L-ornithine from L-glutamate: step 2/4. Catalyzes the ATP-dependent phosphorylation of N-acetyl-L-glutamate. This chain is Acetylglutamate kinase, found in Pelotomaculum thermopropionicum (strain DSM 13744 / JCM 10971 / SI).